A 620-amino-acid polypeptide reads, in one-letter code: Acetylcholinesterase 1 (620 aa).

A signal peptide spans 1 to 31 (MRYSLLFFIFLPCVITAVDLIHLHDGSPLFG). Residue asparagine 74 is glycosylated (N-linked (GlcNAc...) asparagine). Cysteine 82 and cysteine 109 form a disulfide bridge. Serine 216 functions as the Acyl-ester intermediate in the catalytic mechanism. A disulfide bridge links cysteine 270 with cysteine 286. Asparagine 272 is a glycosylation site (N-linked (GlcNAc...) asparagine). Residues glutamate 346 and histidine 468 each act as charge relay system in the active site. Cysteine 430 and cysteine 558 are oxidised to a cystine. Residues asparagine 486 and asparagine 536 are each glycosylated (N-linked (GlcNAc...) asparagine).

It belongs to the type-B carboxylesterase/lipase family. As to quaternary structure, oligomer composed of disulfide-linked homodimers.

Its subcellular location is the synapse. The protein localises to the secreted. It localises to the cell membrane. It carries out the reaction acetylcholine + H2O = choline + acetate + H(+). Its function is as follows. Rapidly hydrolyzes choline released into the synapse. The sequence is that of Acetylcholinesterase 1 (ace-1) from Caenorhabditis briggsae.